The chain runs to 450 residues: uncharacterized protein (450 aa).

Basic and acidic residues predominate over residues 387–416; it reads ELDEKNNNKEENKNQDLHEPKESSSEDLLK. Positions 387 to 439 are disordered; the sequence is ELDEKNNNKEENKNQDLHEPKESSSEDLLKRLNNLKINTNEGPVQDNENHDNE.

This is an uncharacterized protein from Saccharomyces cerevisiae (strain ATCC 204508 / S288c) (Baker's yeast).